The primary structure comprises 383 residues: 1-deoxy-D-xylulose 5-phosphate reductoisomerase (383 aa).

NADPH contacts are provided by Thr10, Gly11, Ser12, Ile13, Asn38, and Asn121. Lys122 is a 1-deoxy-D-xylulose 5-phosphate binding site. Residue Glu123 participates in NADPH binding. Position 147 (Asp147) interacts with Mn(2+). The 1-deoxy-D-xylulose 5-phosphate site is built by Ser148, Glu149, Ser172, and His195. Glu149 is a binding site for Mn(2+). An NADPH-binding site is contributed by Gly201. 4 residues coordinate 1-deoxy-D-xylulose 5-phosphate: Ser208, Asn213, Lys214, and Glu217. A Mn(2+)-binding site is contributed by Glu217.

Belongs to the DXR family. The cofactor is Mg(2+). Mn(2+) serves as cofactor.

The catalysed reaction is 2-C-methyl-D-erythritol 4-phosphate + NADP(+) = 1-deoxy-D-xylulose 5-phosphate + NADPH + H(+). It participates in isoprenoid biosynthesis; isopentenyl diphosphate biosynthesis via DXP pathway; isopentenyl diphosphate from 1-deoxy-D-xylulose 5-phosphate: step 1/6. Functionally, catalyzes the NADPH-dependent rearrangement and reduction of 1-deoxy-D-xylulose-5-phosphate (DXP) to 2-C-methyl-D-erythritol 4-phosphate (MEP). This is 1-deoxy-D-xylulose 5-phosphate reductoisomerase from Vesicomyosocius okutanii subsp. Calyptogena okutanii (strain HA).